The following is a 211-amino-acid chain: MSERGLLIVFSGPSGVGKGTVRQEIFSTPDHKFEYSVSMTTRPQRPGEVDGVDYFFRTREEFEELIKTGQMLEYAEYVGNYYGTPLTYVNETLDKGIDVFLEIEVQGALQVKSKVPDGVFVFLTPPDLDELEDRLVGRGTDSQEVIAQRIERAKEEIALMREYDYAVVNDEVALAAERVKRIIETEHFRVERVIGRYDKMIKITKNPFKAK.

The Guanylate kinase-like domain maps to 5–184 (GLLIVFSGPS…AAERVKRIIE (180 aa)). 12-19 (GPSGVGKG) is a binding site for ATP.

The protein belongs to the guanylate kinase family.

The protein resides in the cytoplasm. The catalysed reaction is GMP + ATP = GDP + ADP. Functionally, essential for recycling GMP and indirectly, cGMP. The protein is Guanylate kinase of Streptococcus pyogenes serotype M3 (strain SSI-1).